Reading from the N-terminus, the 413-residue chain is MEKSQPLSEFFSKQLVDPVSDALRSHTCSEQEMTLLESAIVHARDSLLEEIQRSKISEDVTQTVDCLLSRVDELLEETRNFAPISPLSSEAPDILPAMILFNSLCSSKSLDLEPIEIKVEAMENPVVSPPIFSSDDSVKGMPSRKRAKRSLEDTVQMLSKENSVSPPPPSLPFVLPQIPVPIPFSNAALMQRWLGHPLTNPAYLNAMFQHQPAPKPSEEQFAALMKITMHAANFMKTVPQLPVSNHFTESDAEDIKIDVESDEGEIEVSPSPSTGDITENESSSSSTGPMISPNCGDGDCALEKPFICMHNNCGKRFANKFLLKKHMFIHTGLRPHTCPHCHKKFNRKDNLLRHKKTHSPTSAHLGPILPKNPFHGIPQLPVLHNIALTQGFSHFHALKMSLETGATAVRSLS.

Disordered regions lie at residues 130–151 and 259–290; these read PIFS…KRSL and VESD…TGPM. Polar residues predominate over residues 270 to 281; the sequence is PSPSTGDITENE. 2 consecutive C2H2-type zinc fingers follow at residues 306-330 and 336-358; these read FICM…MFIH and HTCP…KKTH.

It is found in the nucleus. The sequence is that of Putative zinc finger protein B0310.2 from Caenorhabditis elegans.